A 35-amino-acid chain; its full sequence is Cytochrome b6-f complex subunit 5 (35 aa).

Residues 5–25 (LLCGIVLGLIPVTLTGLFVAA) traverse the membrane as a helical segment.

It belongs to the PetG family. The 4 large subunits of the cytochrome b6-f complex are cytochrome b6, subunit IV (17 kDa polypeptide, PetD), cytochrome f and the Rieske protein, while the 4 small subunits are PetG, PetL, PetM and PetN. The complex functions as a dimer.

The protein resides in the plastid. Its subcellular location is the organellar chromatophore thylakoid membrane. Functionally, component of the cytochrome b6-f complex, which mediates electron transfer between photosystem II (PSII) and photosystem I (PSI), cyclic electron flow around PSI, and state transitions. PetG is required for either the stability or assembly of the cytochrome b6-f complex. In Paulinella chromatophora, this protein is Cytochrome b6-f complex subunit 5.